The chain runs to 343 residues: Protein RecA (343 aa).

Residue 64–71 participates in ATP binding; the sequence is GPESSGKT.

Belongs to the RecA family.

It localises to the cytoplasm. Functionally, can catalyze the hydrolysis of ATP in the presence of single-stranded DNA, the ATP-dependent uptake of single-stranded DNA by duplex DNA, and the ATP-dependent hybridization of homologous single-stranded DNAs. It interacts with LexA causing its activation and leading to its autocatalytic cleavage. This is Protein RecA from Bacillus mycoides (strain KBAB4) (Bacillus weihenstephanensis).